The following is a 430-amino-acid chain: Isocitrate dehydrogenase [NADP], mitochondrial (430 aa).

A mitochondrion-targeting transit peptide spans 1-27 (MIRASAIQRTAMLLRQLRGFSTSATLA). Residues 101–103 (TIT) and Arg-108 contribute to the NADP(+) site. Thr-103 is a substrate binding site. Substrate contacts are provided by residues 120-126 (SPNGTIR), Arg-135, and Arg-158. Asp-277 serves as a coordination point for Mn(2+). NADP(+) is bound at residue Lys-285. Asp-300 is a Mn(2+) binding site. NADP(+)-binding positions include 335-340 (GTVTRH) and Asn-353.

It belongs to the isocitrate and isopropylmalate dehydrogenases family. Homodimer. The cofactor is Mg(2+). It depends on Mn(2+) as a cofactor.

The protein resides in the mitochondrion. The catalysed reaction is D-threo-isocitrate + NADP(+) = 2-oxoglutarate + CO2 + NADPH. Mitochondrial IDP1 may regulate flux through the tricarboxylic acid cycle and respiration. Its probably critical function is the production of NADPH. This Candida tropicalis (Yeast) protein is Isocitrate dehydrogenase [NADP], mitochondrial (IDP1).